Here is a 200-residue protein sequence, read N- to C-terminus: Inner membrane-spanning protein YciB (200 aa).

Transmembrane regions (helical) follow at residues 7-27 (HPLF…FVNA), 32-52 (FAAT…SYVV), 56-76 (IPLM…LTLV), 93-113 (LFAA…AIMF), 126-146 (ILTF…EIIW), and 153-173 (FWVG…AIAQ).

Belongs to the YciB family.

Its subcellular location is the cell inner membrane. Plays a role in cell envelope biogenesis, maintenance of cell envelope integrity and membrane homeostasis. The polypeptide is Inner membrane-spanning protein YciB (Bradyrhizobium sp. (strain ORS 278)).